The primary structure comprises 186 residues: Serine hydrolase RBBP9 (186 aa).

The involved in binding to RB1 stretch occupies residues 63-67 (LHCDE). Catalysis depends on charge relay system residues Ser-75, Asp-138, and His-165.

The protein belongs to the RBBP9 family. Interacts with RB1; the interaction disrupts RB1 binding to E2F1. Interacts with RBL1 and RBL2. Highly expressed in the spleen, testis and kidney. Also found in the heart, liver, lung and brain.

It carries out the reaction valacyclovir + H2O = acyclovir + L-valine + H(+). Its function is as follows. Serine hydrolase. Catalyzes the hydrolytic activation of amino acid ester of the antiviral prodrug valacyclovir to its corresponding active drug, acyclovir. May negatively regulate basal or autocrine TGF-beta signaling by suppressing SMAD2-SMAD3 phosphorylation. May play a role in the transformation process due to its capacity to confer resistance to the growth-inhibitory effects of TGF-beta through interaction with RB1 and the subsequent displacement of E2F1. The chain is Serine hydrolase RBBP9 from Rattus norvegicus (Rat).